A 267-amino-acid chain; its full sequence is Protein LicA (267 aa).

It belongs to the peptidase S49 family.

Its function is as follows. Mediates phase variation of the LPS epitopes. Phase variation of H.influenza LPS epitopes expressed by LicA is determined by a translational switch. The protein is Protein LicA (licA) of Haemophilus influenzae (strain ATCC 51907 / DSM 11121 / KW20 / Rd).